The primary structure comprises 743 residues: Putative pentatricopeptide repeat-containing protein At1g68930 (743 aa).

PPR repeat units follow at residues 40–70 (ETFL…IPQP), 71–101 (NLFS…LPDR), 102–132 (DGVT…MMRD), 138–172 (TRVT…GFES), 173–203 (YLLV…LDDR), 204–233 (NTVM…GMEK), 234–268 (DSVS…GLKM), 269–303 (DQYP…NFQD), 304–334 (HIYV…MKQK), 335–369 (NVVS…GIDP), 370–404 (DHYT…GLIH), 405–435 (YVTV…MNVR), 436–470 (DAVS…GLKP), 471–506 (DGVT…GIVP), and 507–537 (SIGH…MPFP). The type E motif stretch occupies residues 542–617 (GWTTLLSACR…EPGQSWIKWK (76 aa)). The type E(+) motif stretch occupies residues 618–648 (GKLHSFSADDESSPYLDQIYAKLEELNNKII). The segment at 649 to 743 (DNGYKPDTSF…DGTCSCGDFW (95 aa)) is type DYW motif.

Belongs to the PPR family. PCMP-H subfamily.

This is Putative pentatricopeptide repeat-containing protein At1g68930 (PCMP-H22) from Arabidopsis thaliana (Mouse-ear cress).